Here is a 219-residue protein sequence, read N- to C-terminus: Probable GTP-binding protein EngB (219 aa).

One can recognise an EngB-type G domain in the interval 24 to 207; the sequence is VQPEIAFAGR…HELIESWLRP (184 aa). GTP contacts are provided by residues 32–39, 59–63, 81–84, 148–151, and 186–188; these read GRSNAGKS, GRTQH, DLPG, TKCD, and FSA. Positions 39 and 61 each coordinate Mg(2+).

This sequence belongs to the TRAFAC class TrmE-Era-EngA-EngB-Septin-like GTPase superfamily. EngB GTPase family. Mg(2+) is required as a cofactor.

In terms of biological role, necessary for normal cell division and for the maintenance of normal septation. The sequence is that of Probable GTP-binding protein EngB from Burkholderia vietnamiensis (strain G4 / LMG 22486) (Burkholderia cepacia (strain R1808)).